The following is a 760-amino-acid chain: Catecholate siderophore receptor Fiu (760 aa).

The N-terminal stretch at 1–31 (MENNRNFPARQFHSLTFFAGLCIGITPVAQA) is a signal peptide. Residues 67–175 (PVADTTRTMT…PTGSINMISK (109 aa)) form the TBDR plug domain. A TBDR beta-barrel domain is found at 180–760 (DSGIDASASI…TFLLTANMHF (581 aa)). Residues 743-760 (RYHPGEPRTFLLTANMHF) carry the TonB C-terminal box motif.

It belongs to the TonB-dependent receptor family.

The protein resides in the cell outer membrane. Involved in the active transport across the outer membrane of iron complexed with catecholate siderophores such as dihydroxybenzoylserine and dihydroxybenzoate. It derives its energy for transport by interacting with the trans-periplasmic membrane protein TonB. Can also transport catechol-substituted cephalosporins. Receptor for microcins M, H47 and E492. The polypeptide is Catecholate siderophore receptor Fiu (fiu) (Escherichia coli (strain K12)).